The following is a 212-amino-acid chain: Uridine kinase (212 aa).

12-19 (GGSGGGKT) is an ATP binding site.

Belongs to the uridine kinase family.

It localises to the cytoplasm. The enzyme catalyses uridine + ATP = UMP + ADP + H(+). It catalyses the reaction cytidine + ATP = CMP + ADP + H(+). Its pathway is pyrimidine metabolism; CTP biosynthesis via salvage pathway; CTP from cytidine: step 1/3. It participates in pyrimidine metabolism; UMP biosynthesis via salvage pathway; UMP from uridine: step 1/1. The sequence is that of Uridine kinase from Streptococcus pneumoniae serotype 2 (strain D39 / NCTC 7466).